We begin with the raw amino-acid sequence, 135 residues long: Large ribosomal subunit protein uL16c (135 aa).

The protein belongs to the universal ribosomal protein uL16 family. As to quaternary structure, part of the 50S ribosomal subunit.

The protein resides in the plastid. It localises to the chloroplast. The chain is Large ribosomal subunit protein uL16c from Oenothera argillicola (Appalachian evening primrose).